Consider the following 901-residue polypeptide: HTH-type transcriptional regulator MalT (901 aa).

Residue 39-46 (SPAGYGKT) participates in ATP binding. Residues 829–894 (ELIHTSPLTQ…AAVQHAQKLL (66 aa)) form the HTH luxR-type domain. The segment at residues 853 to 872 (NEQIAGELEVAATTIKTHIR) is a DNA-binding region (H-T-H motif).

This sequence belongs to the MalT family. Monomer in solution. Oligomerizes to an active state in the presence of the positive effectors ATP and maltotriose.

Its activity is regulated as follows. Activated by ATP and maltotriose, which are both required for DNA binding. Functionally, positively regulates the transcription of the maltose regulon whose gene products are responsible for uptake and catabolism of malto-oligosaccharides. Specifically binds to the promoter region of its target genes, recognizing a short DNA motif called the MalT box. In Shigella sonnei (strain Ss046), this protein is HTH-type transcriptional regulator MalT.